A 413-amino-acid chain; its full sequence is Monacolin J acid methylbutanoyltransferase (413 aa).

Arg73 is a monacolin J binding site. The active-site Acyl-ester intermediate is the Ser76. Positions 173, 188, and 258 each coordinate monacolin J. 2-methylbutanoate is bound at residue Gly366. Positions 388 and 390 each coordinate monacolin J.

Belongs to the class-A beta-lactamase family. In terms of assembly, interacts with LovF.

It carries out the reaction monacolin J carboxylate + (S)-2-methylbutanoyl-[2-methylbutanoate polyketide synthase] = lovastatin carboxylate + holo-[2-methylbutanoate polyketide synthase]. Its pathway is polyketide biosynthesis; lovastatin biosynthesis. Its function is as follows. Monacolin J acid methylbutanoyltransferase; part of the gene cluster that mediates the biosynthesis of lovastatin (also known as mevinolin, mevacor or monacolin K), a hypolipidemic inhibitor of (3S)-hydroxymethylglutaryl-coenzyme A (HMG-CoA) reductase (HMGR). The first step in the biosynthesis of lovastatin is the production of dihydromonacolin L acid by the lovastatin nonaketide synthase lovB and the trans-acting enoyl reductase lovC via condensation of one acetyl-CoA unit and 8 malonyl-CoA units. Dihydromonacolin L acid is released from lovB by the thioesterase lovG. Next, dihydromonacolin L acid is oxidized by the dihydromonacolin L monooxygenase lovA twice to form monacolin J acid. The 2-methylbutyrate moiety of lovastatin is synthesized by the lovastatin diketide synthase lovF via condensation of one acetyl-CoA unit and one malonyl-CoA unit. Finally, the covalent attachment of this moiety to monacolin J acid is catalyzed by the transesterase lovD to yield lovastatin. LovD has broad substrate specificity and can also convert monacolin J to simvastatin using alpha-dimethylbutanoyl-S-methyl-3-mercaptopropionate (DMB-S-MMP) as the thioester acyl donor, and can also catalyze the reverse reaction and function as hydrolase in vitro. LovD has much higher activity with LovF-bound 2-methylbutanoate than with free diketide substrates. The protein is Monacolin J acid methylbutanoyltransferase of Aspergillus terreus (strain NIH 2624 / FGSC A1156).